A 264-amino-acid chain; its full sequence is S-adenosylmethionine decarboxylase proenzyme (264 aa).

Residue serine 114 is the Schiff-base intermediate with substrate; via pyruvic acid of the active site. Serine 114 carries the pyruvic acid (Ser); by autocatalysis modification. Catalysis depends on histidine 119, which acts as the Proton acceptor; for processing activity. The Proton donor; for catalytic activity role is filled by cysteine 142.

Belongs to the prokaryotic AdoMetDC family. Type 2 subfamily. In terms of assembly, heterooctamer of four alpha and four beta chains arranged as a tetramer of alpha/beta heterodimers. The cofactor is pyruvate. Post-translationally, is synthesized initially as an inactive proenzyme. Formation of the active enzyme involves a self-maturation process in which the active site pyruvoyl group is generated from an internal serine residue via an autocatalytic post-translational modification. Two non-identical subunits are generated from the proenzyme in this reaction, and the pyruvate is formed at the N-terminus of the alpha chain, which is derived from the carboxyl end of the proenzyme. The post-translation cleavage follows an unusual pathway, termed non-hydrolytic serinolysis, in which the side chain hydroxyl group of the serine supplies its oxygen atom to form the C-terminus of the beta chain, while the remainder of the serine residue undergoes an oxidative deamination to produce ammonia and the pyruvoyl group blocking the N-terminus of the alpha chain.

The enzyme catalyses S-adenosyl-L-methionine + H(+) = S-adenosyl 3-(methylsulfanyl)propylamine + CO2. It functions in the pathway amine and polyamine biosynthesis; S-adenosylmethioninamine biosynthesis; S-adenosylmethioninamine from S-adenosyl-L-methionine: step 1/1. In terms of biological role, catalyzes the decarboxylation of S-adenosylmethionine to S-adenosylmethioninamine (dcAdoMet), the propylamine donor required for the synthesis of the polyamines spermine and spermidine from the diamine putrescine. The polypeptide is S-adenosylmethionine decarboxylase proenzyme (Chromohalobacter salexigens (strain ATCC BAA-138 / DSM 3043 / CIP 106854 / NCIMB 13768 / 1H11)).